We begin with the raw amino-acid sequence, 359 residues long: MKYPPVHYHDYLGLNPLLNAQHPKSTEYGKPAHDELLFIIVHQTYELWFKQILFELDSVLSTFQKPTVAESEMGIASARLERIVSILKLIIGQVDVLETMTPLDFLDFRDMLYPASGFQSYQWRLIETKLGLRIGDRLAYNQSPFYKSLSESQQGEMLNIMNQPSLHDSVEKWLERTPFLQGENFNFWDSYKEAVNKMFQDDITTVKNNPRLPDEEKAKTVAGLEQTLKSFDALFDEEAFNKLRAEGQFRLSYKAMHAALLIQLHRDQPILQTPFRIIRALLDIDETMTTWRYRHALMAMRMLGQKIGTGGSSGHKYLADATAKHKIFGDFFNLTTFFIPRSQVPPLPKAIADRMSFHY.

Substrate contacts are provided by residues 38–42 (FIIVH) and R109. A heme-binding site is contributed by H295. T309 is a substrate binding site.

Belongs to the tryptophan 2,3-dioxygenase family. In terms of assembly, homotetramer. Requires heme as cofactor.

It catalyses the reaction L-tryptophan + O2 = N-formyl-L-kynurenine. Its pathway is amino-acid degradation; L-tryptophan degradation via kynurenine pathway; L-kynurenine from L-tryptophan: step 1/2. In terms of biological role, heme-dependent dioxygenase that catalyzes the oxidative cleavage of the L-tryptophan (L-Trp) pyrrole ring and converts L-tryptophan to N-formyl-L-kynurenine. Catalyzes the oxidative cleavage of the indole moiety. This is Tryptophan 2,3-dioxygenase from Bdellovibrio bacteriovorus (strain ATCC 15356 / DSM 50701 / NCIMB 9529 / HD100).